The following is a 301-amino-acid chain: Hydroxymycolate synthase MmaA4 (301 aa).

Residues 42–43, 81–83, 103–108, 132–133, and isoleucine 145 each bind S-adenosyl-L-methionine; these read YS, GCG, TLSKNQ, and WE. The active site involves cysteine 278.

It belongs to the CFA/CMAS family. In terms of assembly, monomer.

Its pathway is lipid metabolism; mycolic acid biosynthesis. Inhibited by S-adenosyl-N-decyl-aminoethyl (SADAE). In terms of biological role, involved in the biosynthesis of hydroxymycolate, a common precursor of oxygenated mycolic acids (methoxy-mycolate and keto-mycolate). Probably transfers a methyl group from the S-adenosylmethionine (SAM) cofactor and, subsequently or simultaneously, a water molecule onto the double bound of ethylene substrates, leading to the formation of the hydroxylated product at the distal position. Involved in the activation of the antitubercular drug thiacetazone (TAC). This chain is Hydroxymycolate synthase MmaA4 (mmaA4), found in Mycobacterium tuberculosis (strain ATCC 25618 / H37Rv).